A 589-amino-acid polypeptide reads, in one-letter code: 3-(3-hydroxy-phenyl)propionate/3-hydroxycinnamic acid hydroxylase (589 aa).

Residues 15 to 44 (DVLI…VAEK) and 283 to 293 (FRVDRILLAGD) contribute to the FAD site.

It belongs to the PheA/TfdB FAD monooxygenase family. FAD is required as a cofactor.

It catalyses the reaction 3-(3-hydroxyphenyl)propanoate + NADH + O2 + H(+) = 3-(2,3-dihydroxyphenyl)propanoate + NAD(+) + H2O. The catalysed reaction is (2E)-3-(3-hydroxyphenyl)prop-2-enoate + NADH + O2 + H(+) = (2E)-3-(2,3-dihydroxyphenyl)prop-2-enoate + NAD(+) + H2O. It functions in the pathway aromatic compound metabolism; 3-phenylpropanoate degradation. Functionally, catalyzes the insertion of one atom of molecular oxygen into position 2 of the phenyl ring of 3-(3-hydroxyphenyl)propionate (3-HPP) and hydroxycinnamic acid (3HCI). The chain is 3-(3-hydroxy-phenyl)propionate/3-hydroxycinnamic acid hydroxylase from Comamonas testosteroni (Pseudomonas testosteroni).